Consider the following 81-residue polypeptide: Large ribosomal subunit protein bL31 (81 aa).

This sequence belongs to the bacterial ribosomal protein bL31 family. Type A subfamily. As to quaternary structure, part of the 50S ribosomal subunit.

Functionally, binds the 23S rRNA. The sequence is that of Large ribosomal subunit protein bL31 from Synechocystis sp. (strain ATCC 27184 / PCC 6803 / Kazusa).